The primary structure comprises 300 residues: Protein CANDIDATE G-PROTEIN COUPLED RECEPTOR 2 (300 aa).

Transmembrane regions (helical) follow at residues 37 to 57, 73 to 93, 110 to 130, 152 to 172, 183 to 203, 222 to 242, and 245 to 265; these read GFLH…YLAY, IMIA…AWCC, LTLF…AFLF, IGLD…PLFI, WGLW…IFFM, ITVM…TANG, and FGLW…LPLL.

It belongs to the UPF0359 family. As to quaternary structure, interacts with GPA1. As to expression, expressed at low levels in seedlings.

It localises to the cell membrane. In terms of biological role, plays a role in plants and microbes interactions. G-protein coupled melatonin receptor involved in root growth mediated by the bacterial quorum-sensing signals N-acyl-homoserine lactones (AHLs). Binds to melatonin. Phytomelatonin receptor required, in collaboration with GPA1, for melatonin-mediated stomatal closure involving H(2)O(2) and Ca(2+) signals. Essential for melatonin-mediated plant response to osmotic stress probably by activating reactive oxygen species (ROS) scavenging ability. This chain is Protein CANDIDATE G-PROTEIN COUPLED RECEPTOR 2, found in Arabidopsis thaliana (Mouse-ear cress).